The chain runs to 254 residues: MFPFERQNKIIHLLDQNNKITVPELSRILDVSISTIRNDLSALEESGMIKKVHGGAVLLKSEEKFTNFNDRIIRNIEEKEAIAKEAATLVKNNQTIILDASSTALALAKELHGFSRLTVITSGLYTAIELKDNPNISVILTGGIVTTNSFTLEGILGANLIENIHADLCFMSAKGFTMEEGLTDFNIYETELKRLLAKRTNKLVALLDHTKMGVISTASITTAENIDLLITDNKINKALYKKFQDAGLPVKIAE.

The region spanning 3 to 58 is the HTH deoR-type domain; it reads PFERQNKIIHLLDQNNKITVPELSRILDVSISTIRNDLSALEESGMIKKVHGGAVL. The segment at residues 20-39 is a DNA-binding region (H-T-H motif); the sequence is ITVPELSRILDVSISTIRND.

Functionally, involved in the glycerol metabolism. Repressor of the gol operon for glycerol metabolism. The sequence is that of HTH-type transcriptional regulator GolR from Listeria innocua serovar 6a (strain ATCC BAA-680 / CLIP 11262).